Reading from the N-terminus, the 180-residue chain is Small ribosomal subunit protein uS4 (180 aa).

Residues 102–174 (RRLQTMLVRK…PARKLEQKEE (73 aa)) form the S4 RNA-binding domain. The interval 154–180 (VPFSPLANPEHPARKLEQKEETNEESA) is disordered. A compositionally biased stretch (basic and acidic residues) spans 164–174 (HPARKLEQKEE).

Belongs to the universal ribosomal protein uS4 family. In terms of assembly, part of the 30S ribosomal subunit. Contacts protein S5. The interaction surface between S4 and S5 is involved in control of translational fidelity.

In terms of biological role, one of the primary rRNA binding proteins, it binds directly to 16S rRNA where it nucleates assembly of the body of the 30S subunit. Its function is as follows. With S5 and S12 plays an important role in translational accuracy. This chain is Small ribosomal subunit protein uS4, found in Nanoarchaeum equitans (strain Kin4-M).